The chain runs to 466 residues: Na(+)/H(+) antiporter NhaA (466 aa).

The next 11 membrane-spanning stretches (helical) occupy residues Val-32–Ala-52, Leu-74–Ile-94, Ala-111–Leu-131, Gly-142–Gly-162, Phe-172–Phe-192, Asp-195–Leu-215, Gly-221–Ile-241, Gly-280–Leu-300, Leu-310–Leu-330, Val-348–Leu-368, and Glu-379–Leu-399.

This sequence belongs to the NhaA Na(+)/H(+) (TC 2.A.33) antiporter family.

Its subcellular location is the cell membrane. The catalysed reaction is Na(+)(in) + 2 H(+)(out) = Na(+)(out) + 2 H(+)(in). Its function is as follows. Na(+)/H(+) antiporter that extrudes sodium in exchange for external protons. The polypeptide is Na(+)/H(+) antiporter NhaA (Streptomyces avermitilis (strain ATCC 31267 / DSM 46492 / JCM 5070 / NBRC 14893 / NCIMB 12804 / NRRL 8165 / MA-4680)).